Consider the following 283-residue polypeptide: NADPH-dependent 7-cyano-7-deazaguanine reductase (283 aa).

89-91 (IES) is a substrate binding site. Residue 91 to 92 (SK) participates in NADPH binding. The active-site Thioimide intermediate is Cys190. The Proton donor role is filled by Asp197. Residue 229–230 (HE) participates in substrate binding. 258–259 (RG) lines the NADPH pocket.

Belongs to the GTP cyclohydrolase I family. QueF type 2 subfamily. Homodimer.

The protein resides in the cytoplasm. The enzyme catalyses 7-aminomethyl-7-carbaguanine + 2 NADP(+) = 7-cyano-7-deazaguanine + 2 NADPH + 3 H(+). Its pathway is tRNA modification; tRNA-queuosine biosynthesis. Functionally, catalyzes the NADPH-dependent reduction of 7-cyano-7-deazaguanine (preQ0) to 7-aminomethyl-7-deazaguanine (preQ1). This is NADPH-dependent 7-cyano-7-deazaguanine reductase from Aromatoleum aromaticum (strain DSM 19018 / LMG 30748 / EbN1) (Azoarcus sp. (strain EbN1)).